Consider the following 550-residue polypeptide: Undecaprenyl phosphate-alpha-4-amino-4-deoxy-L-arabinose arabinosyl transferase 2 (550 aa).

11 helical membrane passes run 4 to 24, 81 to 101, 110 to 132, 176 to 196, 204 to 224, 255 to 275, 288 to 308, 313 to 333, 348 to 368, 381 to 401, and 409 to 429; these read LKPG…PLSF, FAVH…VYWL, WLGL…GTYA, FMTK…PWVI, VFIY…PWVI, APFW…LGLL, TQSG…FFSL, LPTY…RYAA, LLFG…WGLA, VLLG…TLRA, and AALC…QQVI.

The protein belongs to the glycosyltransferase 83 family.

It is found in the cell inner membrane. The catalysed reaction is 4-amino-4-deoxy-alpha-L-arabinopyranosyl di-trans,octa-cis-undecaprenyl phosphate + lipid IVA = lipid IIA + di-trans,octa-cis-undecaprenyl phosphate.. The protein operates within lipopolysaccharide metabolism; 4-amino-4-deoxy-beta-L-arabinose-lipid A biosynthesis. Catalyzes the transfer of the L-Ara4N moiety of the glycolipid undecaprenyl phosphate-alpha-L-Ara4N to lipid A. The modified arabinose is attached to lipid A and is required for resistance to polymyxin and cationic antimicrobial peptides. This chain is Undecaprenyl phosphate-alpha-4-amino-4-deoxy-L-arabinose arabinosyl transferase 2, found in Sodalis glossinidius (strain morsitans).